A 101-amino-acid chain; its full sequence is Putative pterin-4-alpha-carbinolamine dehydratase (101 aa).

Belongs to the pterin-4-alpha-carbinolamine dehydratase family.

It catalyses the reaction (4aS,6R)-4a-hydroxy-L-erythro-5,6,7,8-tetrahydrobiopterin = (6R)-L-erythro-6,7-dihydrobiopterin + H2O. This is Putative pterin-4-alpha-carbinolamine dehydratase from Streptomyces coelicolor (strain ATCC BAA-471 / A3(2) / M145).